Consider the following 217-residue polypeptide: Uridine kinase (217 aa).

Position 17-24 (17-24 (GASASGKS)) interacts with ATP.

It belongs to the uridine kinase family.

It localises to the cytoplasm. It carries out the reaction uridine + ATP = UMP + ADP + H(+). The enzyme catalyses cytidine + ATP = CMP + ADP + H(+). Its pathway is pyrimidine metabolism; CTP biosynthesis via salvage pathway; CTP from cytidine: step 1/3. It participates in pyrimidine metabolism; UMP biosynthesis via salvage pathway; UMP from uridine: step 1/1. In Haemophilus ducreyi (strain 35000HP / ATCC 700724), this protein is Uridine kinase.